The following is a 598-amino-acid chain: Elongation factor 4 (598 aa).

One can recognise a tr-type G domain in the interval 2–184 (KNIRNFSIIA…EIVRKIPAPE (183 aa)). Residues 14-19 (DHGKST) and 131-134 (NKID) contribute to the GTP site.

It belongs to the TRAFAC class translation factor GTPase superfamily. Classic translation factor GTPase family. LepA subfamily.

Its subcellular location is the cell inner membrane. The catalysed reaction is GTP + H2O = GDP + phosphate + H(+). In terms of biological role, required for accurate and efficient protein synthesis under certain stress conditions. May act as a fidelity factor of the translation reaction, by catalyzing a one-codon backward translocation of tRNAs on improperly translocated ribosomes. Back-translocation proceeds from a post-translocation (POST) complex to a pre-translocation (PRE) complex, thus giving elongation factor G a second chance to translocate the tRNAs correctly. Binds to ribosomes in a GTP-dependent manner. In Histophilus somni (strain 2336) (Haemophilus somnus), this protein is Elongation factor 4.